The chain runs to 70 residues: uncharacterized protein (70 aa).

Residues 15 to 37 (LLVSSISESAVALIIITIRILFS) traverse the membrane as a helical segment.

Its subcellular location is the membrane. This is an uncharacterized protein from Saccharomyces cerevisiae (strain ATCC 204508 / S288c) (Baker's yeast).